Here is a 149-residue protein sequence, read N- to C-terminus: Putative pre-16S rRNA nuclease (149 aa).

The protein belongs to the YqgF nuclease family.

Its subcellular location is the cytoplasm. Its function is as follows. Could be a nuclease involved in processing of the 5'-end of pre-16S rRNA. This chain is Putative pre-16S rRNA nuclease, found in Synechococcus sp. (strain ATCC 27144 / PCC 6301 / SAUG 1402/1) (Anacystis nidulans).